The sequence spans 113 residues: C-C motif chemokine 15 (113 aa).

The first 21 residues, 1–21 (MKVSVAALSCLMLVAVLGSQA), serve as a signal peptide directing secretion. 3 disulfide bridges follow: Cys53–Cys77, Cys54–Cys93, and Cys64–Cys104.

Belongs to the intercrine beta (chemokine CC) family. As to quaternary structure, monomer. In terms of processing, the N-terminal is proteolytically cleaved by proteases associated with inflammatory responses. The processed forms CCL15(22-92), CCL15(25-92) and CCL15(29-92) exhibit increase in CCR1-mediated signaling and chemotaxis assays in vitro. As to expression, most abundant in heart, skeletal muscle and adrenal gland. Lower levels in placenta, liver, pancreas and bone marrow. CCL15(22-92), CCL15(25-92) and CCL15(29-92) are found in high levels in synovial fluids from rheumatoid patients.

Its subcellular location is the secreted. Its function is as follows. Chemotactic factor that attracts T-cells and monocytes, but not neutrophils, eosinophils, or B-cells. Acts mainly via CC chemokine receptor CCR1. Also binds to CCR3. CCL15(22-92), CCL15(25-92) and CCL15(29-92) are more potent chemoattractants than the CCL15. This Homo sapiens (Human) protein is C-C motif chemokine 15 (CCL15).